Reading from the N-terminus, the 936-residue chain is Protein NNF2 (936 aa).

Over 1 to 41 (MEEQFTNQKKVSHLQSLMNTKRSEQPTEFAKKHRFKDTLAL) the chain is Lumenal. Lys-10 participates in a covalent cross-link: Glycyl lysine isopeptide (Lys-Gly) (interchain with G-Cter in ubiquitin). A helical transmembrane segment spans residues 42 to 62 (FLVFLSFNHFTSLCLLVSFIV). Topologically, residues 63–120 (ATKCKDFLANCFIILFLSKKPSRHIGEVAHIDISTSKVTNGSSNRKSNSRFFGNSKNS) are cytoplasmic. A helical transmembrane segment spans residues 121 to 141 (FVIPIPVLICEILFAMLLKIY). The Lumenal segment spans residues 142 to 245 (GGDYFVKPIK…FKMLGKHSDS (104 aa)). Residues 246–266 (MIYYLSFHILFFSFASSLLHP) traverse the membrane as a helical segment. At 267–936 (HRQTAENKPL…NIHSLIGNSY (670 aa)) the chain is on the cytoplasmic side. Disordered regions lie at residues 297-351 (RISS…SNIL), 387-437 (GSNS…DFFS), and 512-533 (TSEN…QEKH). Low complexity predominate over residues 299–308 (SSSSSVSADS). The segment covering 325-351 (LSSSNQTIHPSQQNNSPVPLSSHSNIL) has biased composition (polar residues). Low complexity-rich tracts occupy residues 394-405 (TTTTSTTTSPTT) and 414-428 (SLSN…SNGN). The segment covering 512-529 (TSENSLTPTNSNTSYVSN) has biased composition (polar residues).

It localises to the endoplasmic reticulum membrane. The polypeptide is Protein NNF2 (NNF2) (Saccharomyces cerevisiae (strain ATCC 204508 / S288c) (Baker's yeast)).